The following is a 250-amino-acid chain: Proteasome subunit alpha type-7 (250 aa).

The protein belongs to the peptidase T1A family. The 26S proteasome consists of a 20S proteasome core and two 19S regulatory subunits. The 20S proteasome core is composed of 28 subunits that are arranged in four stacked rings, resulting in a barrel-shaped structure. The two end rings are each formed by seven alpha subunits, and the two central rings are each formed by seven beta subunits. The catalytic chamber with the active sites is on the inside of the barrel.

Its subcellular location is the cytoplasm. The protein localises to the nucleus. Its function is as follows. The proteasome is a multicatalytic proteinase complex which is characterized by its ability to cleave peptides with Arg, Phe, Tyr, Leu, and Glu adjacent to the leaving group at neutral or slightly basic pH. The proteasome has an ATP-dependent proteolytic activity. The polypeptide is Proteasome subunit alpha type-7 (psmA7) (Dictyostelium discoideum (Social amoeba)).